We begin with the raw amino-acid sequence, 875 residues long: Probable ubiquitin carboxyl-terminal hydrolase 7 (875 aa).

A UBP-type zinc finger spans residues 54-167 (KECSHLKKGV…RDVQQFICSN (114 aa)). 12 residues coordinate Zn(2+): Cys-56, His-58, Cys-83, Cys-86, Cys-101, Cys-104, Cys-109, His-116, His-120, His-127, Cys-140, and Cys-143. In terms of domain architecture, USP spans 208 to 875 (PGLKNLGATC…EAYMLFYERV (668 aa)). The active-site Nucleophile is Cys-217. Phosphoserine is present on residues Ser-333 and Ser-337. Positions 396–486 (YSKELSQSSD…ASPKKEVLKS (91 aa)) are disordered. Residues 401 to 438 (SQSSDSSQHQHDSFLPANSSPLAASSTKSLPSSELLDS) show a composition bias toward low complexity. A compositionally biased stretch (basic and acidic residues) spans 473 to 484 (NHEEASPKKEVL). 2 positions are modified to phosphoserine: Ser-486 and Ser-493. Positions 575–586 (RSRFSRSPKKSS) are enriched in basic residues. The tract at residues 575-628 (RSRFSRSPKKSSVKIVVDNANDDTDQAPTTNSSSLNENLLGGHASENDKSLKQS) is disordered. The span at 600–611 (QAPTTNSSSLNE) shows a compositional bias: polar residues. Ser-645 carries the post-translational modification Phosphoserine. His-812 serves as the catalytic Proton acceptor.

This sequence belongs to the peptidase C19 family.

It catalyses the reaction Thiol-dependent hydrolysis of ester, thioester, amide, peptide and isopeptide bonds formed by the C-terminal Gly of ubiquitin (a 76-residue protein attached to proteins as an intracellular targeting signal).. The chain is Probable ubiquitin carboxyl-terminal hydrolase 7 (ubp7) from Schizosaccharomyces pombe (strain 972 / ATCC 24843) (Fission yeast).